Reading from the N-terminus, the 377-residue chain is Transcription initiation factor IIA subunit 1 (377 aa).

An N-acetylalanine modification is found at A2. Low complexity-rich tracts occupy residues 69-79 (QVQQQHQPQQQ), 89-105 (QAQP…TQQV), and 248-280 (QAQI…TGDT). Disordered stretches follow at residues 69–107 (QVQQ…QVLI) and 248–330 (QAQI…QELF). S281 and S282 each carry phosphoserine; by TAF1. Acidic residues predominate over residues 281–330 (SSEEDEDEEEDYDDDEEEDKEKDGAEDGQVEEEPLNSEDDVSDEEGQELF). S317 and S322 each carry phosphoserine. Residues H344 and R345 each contribute to the DNA site.

The protein belongs to the TFIIA subunit 1 family. TFIIA is a heterodimer of the large unprocessed subunit 1 and a small subunit gamma. It was originally believed to be a heterotrimer of an alpha (p35), a beta (p19) and a gamma subunit (p12). TFIIA forms a complex with TBP. Part of TBP-based Pol II pre-initiation complex (PIC), in which Pol II core assembles with general transcription factors and other specific initiation factors including GTF2E1, GTF2E2, GTF2F1, GTF2F2, TCEA1, ERCC2, ERCC3, GTF2H2, GTF2H3, GTF2H4, GTF2H5, GTF2A1, GTF2A2, GTF2B and TBP; this large multi-subunit PIC complex mediates DNA unwinding and targets Pol II core to the transcription start site where the first phosphodiester bond forms. In terms of processing, the alpha and beta subunits are postranslationally produced from the precursor formby TASP1. The cleavage promotes proteasomal degradation.

Its subcellular location is the nucleus. TFIIA is a component of the transcription machinery of RNA polymerase II and plays an important role in transcriptional activation. TFIIA in a complex with TBP mediates transcriptional activity. The chain is Transcription initiation factor IIA subunit 1 (Gtf2a1) from Rattus norvegicus (Rat).